Here is a 305-residue protein sequence, read N- to C-terminus: Aspartate carbamoyltransferase catalytic subunit (305 aa).

2 residues coordinate carbamoyl phosphate: arginine 52 and threonine 53. An L-aspartate-binding site is contributed by lysine 80. Residues arginine 102, histidine 132, and glutamine 135 each contribute to the carbamoyl phosphate site. Arginine 165 and arginine 217 together coordinate L-aspartate. Carbamoyl phosphate contacts are provided by alanine 258 and proline 259.

The protein belongs to the aspartate/ornithine carbamoyltransferase superfamily. ATCase family. As to quaternary structure, heterododecamer (2C3:3R2) of six catalytic PyrB chains organized as two trimers (C3), and six regulatory PyrI chains organized as three dimers (R2).

It catalyses the reaction carbamoyl phosphate + L-aspartate = N-carbamoyl-L-aspartate + phosphate + H(+). Its pathway is pyrimidine metabolism; UMP biosynthesis via de novo pathway; (S)-dihydroorotate from bicarbonate: step 2/3. Catalyzes the condensation of carbamoyl phosphate and aspartate to form carbamoyl aspartate and inorganic phosphate, the committed step in the de novo pyrimidine nucleotide biosynthesis pathway. The polypeptide is Aspartate carbamoyltransferase catalytic subunit (Latilactobacillus sakei subsp. sakei (strain 23K) (Lactobacillus sakei subsp. sakei)).